The following is a 225-amino-acid chain: Phosphoribosylformylglycinamidine synthase subunit PurQ (225 aa).

Residues 4–225 (RIGVITFPGT…LSVLDTLVTA (222 aa)) form the Glutamine amidotransferase type-1 domain. Catalysis depends on C87, which acts as the Nucleophile. Catalysis depends on residues H196 and E198.

In terms of assembly, part of the FGAM synthase complex composed of 1 PurL, 1 PurQ and 2 PurS subunits.

It localises to the cytoplasm. It catalyses the reaction N(2)-formyl-N(1)-(5-phospho-beta-D-ribosyl)glycinamide + L-glutamine + ATP + H2O = 2-formamido-N(1)-(5-O-phospho-beta-D-ribosyl)acetamidine + L-glutamate + ADP + phosphate + H(+). The enzyme catalyses L-glutamine + H2O = L-glutamate + NH4(+). Its pathway is purine metabolism; IMP biosynthesis via de novo pathway; 5-amino-1-(5-phospho-D-ribosyl)imidazole from N(2)-formyl-N(1)-(5-phospho-D-ribosyl)glycinamide: step 1/2. Part of the phosphoribosylformylglycinamidine synthase complex involved in the purines biosynthetic pathway. Catalyzes the ATP-dependent conversion of formylglycinamide ribonucleotide (FGAR) and glutamine to yield formylglycinamidine ribonucleotide (FGAM) and glutamate. The FGAM synthase complex is composed of three subunits. PurQ produces an ammonia molecule by converting glutamine to glutamate. PurL transfers the ammonia molecule to FGAR to form FGAM in an ATP-dependent manner. PurS interacts with PurQ and PurL and is thought to assist in the transfer of the ammonia molecule from PurQ to PurL. The polypeptide is Phosphoribosylformylglycinamidine synthase subunit PurQ (Nocardia farcinica (strain IFM 10152)).